We begin with the raw amino-acid sequence, 501 residues long: Endoglucanase 8 (501 aa).

Positions 1–35 (MKPRSSRDGHNAAAAAALLLAALVLSGDVLPAVVA) are cleaved as a signal peptide. The active-site Nucleophile is the Asp95. Asn298 is a glycosylation site (N-linked (GlcNAc...) asparagine). His414 is an active-site residue. Asn462 carries an N-linked (GlcNAc...) asparagine glycan. The active site involves Asp465. N-linked (GlcNAc...) asparagine glycosylation occurs at Asn469. Residue Glu474 is part of the active site.

Belongs to the glycosyl hydrolase 9 (cellulase E) family.

It localises to the secreted. It carries out the reaction Endohydrolysis of (1-&gt;4)-beta-D-glucosidic linkages in cellulose, lichenin and cereal beta-D-glucans.. The polypeptide is Endoglucanase 8 (Oryza sativa subsp. japonica (Rice)).